Here is a 196-residue protein sequence, read N- to C-terminus: MSQGLQLLFLGCACSLAPAMAMREVTVACSETADLPCTAPWDPQLSYAVSWAKVSESGTESVELPESKQNSSFEAPRRRAYSLTIQNTTICSSGTYRCALQELGGQRNLSGTVVLKVTGCPKEATESTFRKYRAEAVLLFSLVVFYLTLIIFTCKFARLQSIFPDISKPGTEQAFLPVTSPSKHLGPVTLPKTETV.

A signal peptide spans 1–21 (MSQGLQLLFLGCACSLAPAMA). Residues 22–110 (MREVTVACSE…QELGGQRNLS (89 aa)) enclose the Ig-like V-type domain. The Extracellular segment spans residues 22–133 (MREVTVACSE…ATESTFRKYR (112 aa)). C37 and C98 form a disulfide bridge. 3 N-linked (GlcNAc...) asparagine glycosylation sites follow: N70, N87, and N108. The helical transmembrane segment at 134–154 (AEAVLLFSLVVFYLTLIIFTC) threads the bilayer. Residues 155–196 (KFARLQSIFPDISKPGTEQAFLPVTSPSKHLGPVTLPKTETV) are Cytoplasmic-facing.

As to quaternary structure, monomer. Homodimer. Homotrimer. Interacts with MARCHF1; this interaction antagonizes MARCHF1-mediated MHC II and CD86 down-regulation. Abundantly expressed in spleen and brain, but is also detected in most tissues analyzed.

Its subcellular location is the membrane. Its function is as follows. Transmembrane glycoprotein predominantly found on the surface of many immune cells including dendritic cells or lymphocytes that plays various roles in immune response regulation. Plays an essential role in CD4(+) T-selection, differentiation and stability by regulating the activity of the major E3 ubiquitin ligase responsible for controlling MHC II trafficking MARCHF8. Also inhibits MARCHF1 association with MHC II and ubiquitination of MHCII. In addition, acts as an important modulator of protective responses against acute infections. This Mus musculus (Mouse) protein is CD83 antigen (Cd83).